Reading from the N-terminus, the 121-residue chain is Alpha-lactalbumin (121 aa).

The 121-residue stretch at 1-121 (IDYRKCQASQ…CLEDLDQWRC (121 aa)) folds into the C-type lysozyme domain. Intrachain disulfides connect Cys-6–Cys-121, Cys-28–Cys-112, Cys-61–Cys-77, and Cys-73–Cys-91. A glycan (N-linked (GlcNAc...) asparagine) is linked at Asn-44. Ca(2+)-binding residues include Lys-79, Asp-82, Asp-84, Asp-87, and Asp-88.

The protein belongs to the glycosyl hydrolase 22 family. Lactose synthase (LS) is a heterodimer of a catalytic component, beta1,4-galactosyltransferase (beta4Gal-T1) and a regulatory component, alpha-lactalbumin (LA). In terms of tissue distribution, mammary gland specific. Secreted in milk.

The protein resides in the secreted. Its function is as follows. Regulatory subunit of lactose synthase, changes the substrate specificity of galactosyltransferase in the mammary gland making glucose a good acceptor substrate for this enzyme. This enables LS to synthesize lactose, the major carbohydrate component of milk. In other tissues, galactosyltransferase transfers galactose onto the N-acetylglucosamine of the oligosaccharide chains in glycoproteins. This is Alpha-lactalbumin (LALBA) from Notamacropus rufogriseus (Red-necked wallaby).